The sequence spans 203 residues: Tic20 family protein Ycf60 (203 aa).

5 consecutive transmembrane segments (helical) span residues 2 to 22 (IRLFTFGIITMLVLVIARLAI), 51 to 71 (IIPYYLPLFEGLQNFGQYVLP), 84 to 104 (ILLPMLIFYMNHAILGLVTFF), 131 to 151 (ILLFLVGSLFGAIFRAFPIEF), and 153 to 173 (ISFIGLTVCNMMFWFILSTIT).

It belongs to the Tic20 family.

The protein resides in the plastid. It localises to the chloroplast membrane. In Porphyra purpurea (Red seaweed), this protein is Tic20 family protein Ycf60 (ycf60).